Consider the following 320-residue polypeptide: ATP-dependent 6-phosphofructokinase (320 aa).

Glycine 12 lines the ATP pocket. ADP-binding positions include 22-26 (RGVVR) and 55-60 (RYSVSD). ATP-binding positions include 73-74 (RF) and 103-106 (GDGS). Aspartate 104 is a Mg(2+) binding site. Residue 126 to 128 (TID) participates in substrate binding. The Proton acceptor role is filled by aspartate 128. Arginine 155 contacts ADP. Residues arginine 163 and 170–172 (MGR) contribute to the substrate site. Residues 186 to 188 (GCE), lysine 212, and 214 to 216 (KKH) contribute to the ADP site. Substrate contacts are provided by residues glutamate 223, arginine 244, and 250–253 (HIQR).

It belongs to the phosphofructokinase type A (PFKA) family. ATP-dependent PFK group I subfamily. Prokaryotic clade 'B1' sub-subfamily. In terms of assembly, homotetramer. Mg(2+) serves as cofactor.

It localises to the cytoplasm. The catalysed reaction is beta-D-fructose 6-phosphate + ATP = beta-D-fructose 1,6-bisphosphate + ADP + H(+). The protein operates within carbohydrate degradation; glycolysis; D-glyceraldehyde 3-phosphate and glycerone phosphate from D-glucose: step 3/4. With respect to regulation, allosterically activated by ADP and other diphosphonucleosides, and allosterically inhibited by phosphoenolpyruvate. Functionally, catalyzes the phosphorylation of D-fructose 6-phosphate to fructose 1,6-bisphosphate by ATP, the first committing step of glycolysis. The sequence is that of ATP-dependent 6-phosphofructokinase from Pectobacterium carotovorum subsp. carotovorum (strain PC1).